Reading from the N-terminus, the 479-residue chain is uncharacterized protein (479 aa).

ATP-binding positions include 150 to 158 (TSGSTGKPK), aspartate 360, arginine 375, and lysine 462.

This sequence belongs to the ATP-dependent AMP-binding enzyme family.

Functionally, may be involved in fatty acid metabolism. This is an uncharacterized protein from Bacillus subtilis (strain 168).